The chain runs to 613 residues: Transcription factor cbf11 (613 aa).

The segment at 32–58 is disordered; it reads NNGLHNQEDGAGGRNENSERVGSGSPG.

It belongs to the Su(H) family.

Its subcellular location is the cytoplasm. The protein localises to the nucleus. Functionally, transcription factor that behaves as a negative regulator of adhesion. Recognizes specifically the canonical CSL response element GTGA/GGAA. May also play a cbf12-antagonistic role in the regulation of a number of other important processes such as extracellular material production, colony morphogenesis, ploidy maintenance, or meiosis. This chain is Transcription factor cbf11 (cbf11), found in Schizosaccharomyces pombe (strain 972 / ATCC 24843) (Fission yeast).